Consider the following 233-residue polypeptide: Adenosylcobinamide-GDP ribazoletransferase (233 aa).

7 helical membrane-spanning segments follow: residues 24-44 (LWAF…VLYL), 46-66 (LPLS…LLHL), 96-116 (IAGL…LQLV), 117-137 (PFYA…LALA), 156-176 (SGQL…VVVY), 184-204 (LLGL…FGGI), and 209-229 (IGAI…FAGA).

Belongs to the CobS family. The cofactor is Mg(2+).

Its subcellular location is the cell membrane. The enzyme catalyses alpha-ribazole + adenosylcob(III)inamide-GDP = adenosylcob(III)alamin + GMP + H(+). It carries out the reaction alpha-ribazole 5'-phosphate + adenosylcob(III)inamide-GDP = adenosylcob(III)alamin 5'-phosphate + GMP + H(+). It participates in cofactor biosynthesis; adenosylcobalamin biosynthesis; adenosylcobalamin from cob(II)yrinate a,c-diamide: step 7/7. Functionally, joins adenosylcobinamide-GDP and alpha-ribazole to generate adenosylcobalamin (Ado-cobalamin). Also synthesizes adenosylcobalamin 5'-phosphate from adenosylcobinamide-GDP and alpha-ribazole 5'-phosphate. This Thermococcus onnurineus (strain NA1) protein is Adenosylcobinamide-GDP ribazoletransferase.